Consider the following 341-residue polypeptide: Formimidoylglutamase (341 aa).

Mn(2+) is bound by residues H133, D162, H164, D166, C253, and D255.

It belongs to the arginase family. It depends on Mn(2+) as a cofactor.

It catalyses the reaction N-formimidoyl-L-glutamate + H2O = formamide + L-glutamate. It participates in amino-acid degradation; L-histidine degradation into L-glutamate; L-glutamate from N-formimidoyl-L-glutamate (hydrolase route): step 1/1. In terms of biological role, catalyzes the conversion of N-formimidoyl-L-glutamate to L-glutamate and formamide. This Aromatoleum aromaticum (strain DSM 19018 / LMG 30748 / EbN1) (Azoarcus sp. (strain EbN1)) protein is Formimidoylglutamase.